Reading from the N-terminus, the 299-residue chain is GDNF family receptor alpha-4 (299 aa).

An N-terminal signal peptide occupies residues 1-20 (MVRCLGPALLLLLLLGSASS). A disordered region spans residues 145–198 (RGLSPAHRPPAAQASPPGLSGLVHPSAQRPRRLPAGPGRPLPARLRGPRGVPAG). Residues 177–198 (LPAGPGRPLPARLRGPRGVPAG) are compositionally biased toward low complexity. N-linked (GlcNAc...) asparagine glycosylation occurs at Asn-208. Gly-278 carries GPI-anchor amidated glycine lipidation. Residues 279 to 299 (RALERRSLLSILPVLALPALL) constitute a propeptide, removed in mature form.

The protein belongs to the GDNFR family. In terms of assembly, interacts with ARTN ligand and RET: forms a 2:2:2 ternary complex composed of ARTN ligand, GFRA3 and RET receptor. Interacts with SORL1. In terms of tissue distribution, predominantly expressed in the adult thyroid gland. Low levels also found in fetal adrenal and thyroid glands.

The protein resides in the cell membrane. It localises to the secreted. Its function is as follows. Receptor for persephin (PSPN), a growth factor that exhibits neurotrophic activity on mesencephalic dopaminergic and motor neurons. Acts by binding to its coreceptor, GFRA4, leading to autophosphorylation and activation of the RET receptor. May be important in C-cell development and, in the postnatal development of the adrenal medulla. The protein is GDNF family receptor alpha-4 (GFRA4) of Homo sapiens (Human).